The sequence spans 67 residues: Theromin (67 aa).

The region spanning Cys-2–Cys-27 is the Antistasin-like domain.

In terms of assembly, homodimer. Eight disulfide bonds are present.

Its subcellular location is the secreted. Potent thrombin-specific inhibitor. This is Theromin from Theromyzon tessulatum (Duck leech).